Consider the following 215-residue polypeptide: 2-phospho-L-lactate guanylyltransferase (215 aa).

It belongs to the CofC family. Homodimer.

It carries out the reaction (2S)-2-phospholactate + GTP + H(+) = (2S)-lactyl-2-diphospho-5'-guanosine + diphosphate. The protein operates within cofactor biosynthesis; coenzyme F420 biosynthesis. In terms of biological role, guanylyltransferase that catalyzes the activation of (2S)-2-phospholactate (2-PL) as (2S)-lactyl-2-diphospho-5'-guanosine, via the condensation of 2-PL with GTP. It is involved in the biosynthesis of coenzyme F420, a hydride carrier cofactor. The protein is 2-phospho-L-lactate guanylyltransferase of Methanoculleus marisnigri (strain ATCC 35101 / DSM 1498 / JR1).